Consider the following 345-residue polypeptide: MKNNNNTTKSTTMSSSVLSTNETFPTTINSATKIFRYQHIMPAPSPLIPGGNQNQPAGTMPIKTRKYTPRGMALTRCSESVSSLSPGSSPAPYNVDQSQSVQRRNARERNRVKQVNNSFARLRQHIPQSIITDLTKGGGRGPHKKISKVDTLRIAVEYIRRLQDLVDDLNGGSNIGANNAVTQLQLCLDESSSHSSSSSTCSSSGHNTYYQNTISVSPLQQQQQLQRQQFNHQPLTALSLNTNLVGTSVPGGDAGCVSTSKNQQTCHSPTSSFNSSMSFDSGTYEGVPQQISTHLDRLDHLDNELHTHSQLQLKFEPYEHFQLDEEDCTPDDEEILDYISLWQEQ.

The segment covering 78–92 (SESVSSLSPGSSPAP) has biased composition (low complexity). Positions 78–109 (SESVSSLSPGSSPAPYNVDQSQSVQRRNARER) are disordered. Residues 99–162 (QSVQRRNARE…RIAVEYIRRL (64 aa)) form the bHLH domain.

In terms of assembly, efficient DNA binding requires dimerization with another bHLH protein. Interacts with da (via bHLH motif). Interacts with Bap60. L(1)SC, SC and AC strongly label the presumptive stomatogastric nervous system, while ASE is more prominent in the presumptive procephalic lobe. Associates with the somatic nuclei through nuclear cycles 9 and 10. During nuclear cycle 11 distributes uniformly in the embryo.

Its function is as follows. AS-C proteins are involved in the determination of the neuronal precursors in the peripheral nervous system and the central nervous system. Also involved in sex determination and dosage compensation. This is Achaete-scute complex protein T4 (sc) from Drosophila melanogaster (Fruit fly).